The primary structure comprises 409 residues: MKAEILCVGTELLLGDIVNTNAQYISKELANIGIEVYHHSVIGDNENRLLKELERAFNYCDLVITTGGLGPTKDDLTKESVAKFFQEDLVLHEKSLKQIEKRLSCFNKSMTESNRKQAYFPKNCEILENPNGTAPGFIIEKDNKIAIILPGPPYEMQPMFENKVIPYLEKLTNSTIKSKVLRITGIGESDVADLISDILESQTNPTVAPYAKQGETTLRITAKANSEEKALSLIVPIEKKIRQILGDNIYGSGETLLEEVVANILVKRNLTIATAESCTGGLLAGKLINFPGISSVFLEGAITYSNESKINRLNVKKETLEKYTAVSKEVALEMAEGIAKSAGTNIGISTTGVAGPGGGTYDKPIGLIYIGLYINGKTFVEELNYSGNRQFIRNITVTRALDFLRRNLE.

This sequence belongs to the CinA family.

The chain is Putative competence-damage inducible protein from Clostridium botulinum (strain 657 / Type Ba4).